The primary structure comprises 525 residues: Peptide chain release factor 3 (525 aa).

In terms of domain architecture, tr-type G spans asparagine 11 to alanine 279. Residues serine 20–threonine 27, aspartate 88–histidine 92, and asparagine 142–aspartate 145 contribute to the GTP site.

Belongs to the TRAFAC class translation factor GTPase superfamily. Classic translation factor GTPase family. PrfC subfamily.

Its subcellular location is the cytoplasm. Its function is as follows. Increases the formation of ribosomal termination complexes and stimulates activities of RF-1 and RF-2. It binds guanine nucleotides and has strong preference for UGA stop codons. It may interact directly with the ribosome. The stimulation of RF-1 and RF-2 is significantly reduced by GTP and GDP, but not by GMP. The chain is Peptide chain release factor 3 from Ligilactobacillus salivarius (strain UCC118) (Lactobacillus salivarius).